A 538-amino-acid chain; its full sequence is MFS-type transporter oryC (538 aa).

6 helical membrane passes run 14-34 (LTGGWLTFWVTVACATDMSLF), 67-87 (TVTAIYDVGCFFGAIVAFTIG), 96-116 (ILLGTTIMAIGAVLQAASFSL), 120-140 (FVGRIILGIGNGINTATAPIW), 162-182 (IFGFCLVNWINYGLSFVGGSI), and 186-206 (FPLAFQFFFLIILWSTTPWLP). An N-linked (GlcNAc...) asparagine glycan is attached at asparagine 268. 6 helical membrane-spanning segments follow: residues 288–308 (FGGINIMSYYLPTVLMDSVGL), 315–335 (LLAACNALSYLVFSGLAVLLV), 342–362 (GLMLLSTFGQFLCFLIITILL), 379–399 (VAFFFLYYGAFGIGMLGVPWL), 416–436 (VATATDWITNFVVVEITPIGI), and 443–463 (FWIVWTVTNAAFLPILYFLYP). Asparagine 467 is a glycosylation site (N-linked (GlcNAc...) asparagine).

The protein belongs to the major facilitator superfamily. Sugar transporter (TC 2.A.1.1) family.

The protein resides in the membrane. Its function is as follows. MFS-type transporter; part of the gene cluster that mediates the biosynthesis of oryzines, natural products with an unusual maleidride backbone. The protein is MFS-type transporter oryC of Aspergillus oryzae (strain ATCC 42149 / RIB 40) (Yellow koji mold).